We begin with the raw amino-acid sequence, 570 residues long: Eukaryotic translation initiation factor 2A (570 aa).

WD repeat units follow at residues 274–316 (EKKG…FDTI) and 318–358 (GPRN…EIIS). Positions 468 to 526 (PPHLRKPLGGGGSAGPPSAAAPTPGNQNQRPAQPRANGNGNAPQPFRPQQSEQERKAFQ) are disordered. Low complexity predominate over residues 482–492 (GPPSAAAPTPG). Residues 493 to 518 (NQNQRPAQPRANGNGNAPQPFRPQQS) show a composition bias toward polar residues. A coiled-coil region spans residues 519 to 541 (EQERKAFQLKKKVEEIKVLKQRV).

This sequence belongs to the WD repeat EIF2A family.

Functionally, functions in the early steps of protein synthesis of a small number of specific mRNAs. Acts by directing the binding of methionyl-tRNAi to 40S ribosomal subunits. In contrast to the eIF-2 complex, it binds methionyl-tRNAi to 40S subunits in a codon-dependent manner, whereas the eIF-2 complex binds methionyl-tRNAi to 40S subunits in a GTP-dependent manner. In Caenorhabditis elegans, this protein is Eukaryotic translation initiation factor 2A.